A 359-amino-acid chain; its full sequence is DNA replication and repair protein RecF (359 aa).

30–37 (GPNGSGKT) contacts ATP.

The protein belongs to the RecF family.

Its subcellular location is the cytoplasm. Its function is as follows. The RecF protein is involved in DNA metabolism; it is required for DNA replication and normal SOS inducibility. RecF binds preferentially to single-stranded, linear DNA. It also seems to bind ATP. This is DNA replication and repair protein RecF from Vibrio vulnificus (strain YJ016).